Reading from the N-terminus, the 275-residue chain is 2-dehydro-3-deoxyphosphooctonate aldolase (275 aa).

The protein belongs to the KdsA family.

It is found in the cytoplasm. The catalysed reaction is D-arabinose 5-phosphate + phosphoenolpyruvate + H2O = 3-deoxy-alpha-D-manno-2-octulosonate-8-phosphate + phosphate. The protein operates within carbohydrate biosynthesis; 3-deoxy-D-manno-octulosonate biosynthesis; 3-deoxy-D-manno-octulosonate from D-ribulose 5-phosphate: step 2/3. It functions in the pathway bacterial outer membrane biogenesis; lipopolysaccharide biosynthesis. This Francisella tularensis subsp. holarctica (strain LVS) protein is 2-dehydro-3-deoxyphosphooctonate aldolase.